The chain runs to 342 residues: tRNA-specific 2-thiouridylase MnmA 2 (342 aa).

Cys62 (nucleophile) is an active-site residue. Cys62 and Cys160 are disulfide-bonded. Residue Gly86 participates in ATP binding. Positions 110–112 (KDQ) are interaction with tRNA. The active-site Cysteine persulfide intermediate is Cys160. The tract at residues 268-269 (RY) is interaction with tRNA.

This sequence belongs to the MnmA/TRMU family.

The protein localises to the cytoplasm. The enzyme catalyses S-sulfanyl-L-cysteinyl-[protein] + uridine(34) in tRNA + AH2 + ATP = 2-thiouridine(34) in tRNA + L-cysteinyl-[protein] + A + AMP + diphosphate + H(+). Catalyzes the 2-thiolation of uridine at the wobble position (U34) of tRNA, leading to the formation of s(2)U34. This Syntrophus aciditrophicus (strain SB) protein is tRNA-specific 2-thiouridylase MnmA 2.